Consider the following 332-residue polypeptide: Protein pelota homolog (332 aa).

The protein belongs to the eukaryotic release factor 1 family. Pelota subfamily. Monomer. The cofactor is a divalent metal cation.

Its subcellular location is the cytoplasm. Its function is as follows. May function in recognizing stalled ribosomes, interact with stem-loop structures in stalled mRNA molecules, and effect endonucleolytic cleavage of the mRNA. May play a role in the release non-functional ribosomes and degradation of damaged mRNAs. Has endoribonuclease activity. The sequence is that of Protein pelota homolog from Pyrobaculum calidifontis (strain DSM 21063 / JCM 11548 / VA1).